The sequence spans 222 residues: Nudix hydrolase 11 (222 aa).

The Nudix hydrolase domain maps to 31–175 (AKSSAVLVCL…EGERYLLQYF (145 aa)). Residues 73 to 96 (GGKRDQEDKDDIATALREAREEIG) carry the Nudix box motif. The Mg(2+) site is built by Glu-90 and Glu-94. A helical transmembrane segment spans residues 186 to 204 (FIIWALTAGILIRVASIVY).

It belongs to the Nudix hydrolase family. PCD1 subfamily. Mn(2+) serves as cofactor. The cofactor is Mg(2+). In terms of tissue distribution, expressed in roots, stems and leaves.

It is found in the peroxisome membrane. In terms of biological role, coenzyme A diphosphatase which mediates the cleavage of CoA into 3',5'-ADP from CoA and 4'-phosphopantetheine. Can use malonyl-CoA, hexanoyl-CoA, lauroyl-CoA, myristoyl-CoA and palmitoyl-CoA as substrates, but not isobutyryl-CoA or propionyl-CoA. This chain is Nudix hydrolase 11 (NUDT11), found in Arabidopsis thaliana (Mouse-ear cress).